The sequence spans 197 residues: MKNHPYRDMTAAMVRTGILGFGGGPSVIPLIRHEAVNKYKWIDDDEFGEILAIANALPGPIATKMAAYLGFKLKGTLGAIVAILAHILPTCLAMVGLFAAVNVLSHSAIVAGMIGAVTPVIAVMLGIMAYEFGQKALKGFGWVTGILFFIIAFIGLQTLQINPGLVIIIFLAYGAFHFKLKDKITNKHSKDKGMSAS.

6 consecutive transmembrane segments (helical) span residues 11-31 (AAMV…IPLI), 50-70 (ILAI…AYLG), 79-99 (AIVA…GLFA), 108-128 (AIVA…LGIM), 136-156 (ALKG…FIGL), and 158-178 (TLQI…AFHF).

Belongs to the chromate ion transporter (CHR) (TC 2.A.51) family.

The protein localises to the cell membrane. This is an uncharacterized protein from Bacillus subtilis (strain 168).